A 362-amino-acid polypeptide reads, in one-letter code: NAD(P)H-quinone oxidoreductase subunit 1, chloroplastic (362 aa).

8 helical membrane-spanning segments follow: residues 27 to 47 (IWIL…LVIV), 94 to 114 (IPLF…SFLV), 128 to 148 (IGVF…LMAG), 164 to 184 (AAQS…ISLL), 202 to 222 (FFGW…ISSL), 247 to 267 (YSGI…LVSS), 303 to 323 (TMSI…SITI), and 335 to 355 (LLNL…LLTT).

The protein belongs to the complex I subunit 1 family. As to quaternary structure, NDH is composed of at least 16 different subunits, 5 of which are encoded in the nucleus.

It is found in the plastid. It localises to the chloroplast thylakoid membrane. The enzyme catalyses a plastoquinone + NADH + (n+1) H(+)(in) = a plastoquinol + NAD(+) + n H(+)(out). It carries out the reaction a plastoquinone + NADPH + (n+1) H(+)(in) = a plastoquinol + NADP(+) + n H(+)(out). Its function is as follows. NDH shuttles electrons from NAD(P)H:plastoquinone, via FMN and iron-sulfur (Fe-S) centers, to quinones in the photosynthetic chain and possibly in a chloroplast respiratory chain. The immediate electron acceptor for the enzyme in this species is believed to be plastoquinone. Couples the redox reaction to proton translocation, and thus conserves the redox energy in a proton gradient. The polypeptide is NAD(P)H-quinone oxidoreductase subunit 1, chloroplastic (ndhA) (Oryza sativa (Rice)).